A 272-amino-acid chain; its full sequence is MAAKVFESIGKFGLALAVAGGVVNSALYNVDAGHRAVIFDRFRGVQDIVVGEGTHFLIPWVQKPIIFDCRSRPRNVPVITGSKDLQNVNITLRILFRPVASQLPRIFTSIGEDYDERVLPSITTEILKSVVARFDAGELITQRELVSRQVSDDLTERAATFGLILDDVSLTHLTFGKEFTEAVEAKQVAQQEAERARFVVEKAEQQKKAAIISAEGDSKAAELIANSLATAGDGLIELRKLEAAEDIAYQLSRSRNITYLPAGQSVLLQLPQ.

A2 bears the N-acetylalanine mark. The residue at position 91 (T91) is a Phosphothreonine. N6-acetyllysine is present on residues K128 and K186. The stretch at 177–211 forms a coiled coil; sequence KEFTEAVEAKQVAQQEAERARFVVEKAEQQKKAAI. K202 is subject to N6-acetyllysine; alternate. Position 202 is an N6-succinyllysine; alternate (K202). At Y249 the chain carries Phosphotyrosine.

It belongs to the prohibitin family. The mitochondrial prohibitin complex consists of two subunits (PHB1 and PHB2), assembled into a membrane-associated ring-shaped supercomplex of approximately 1 mDa. Interacts with STOML2. Interacts with MAP1LC3B (membrane-bound form LC3-II); the interaction requires PHB2 and takes place upon Parkin-mediated mitochondrial damage. Interacts with STAT3 (unphosphorylated or phosphorylated at 'Ser-727'). Interacts with CLPB. Interacts with CD86 (via cytoplasmic domain); the interactions increases after priming with CD40.

The protein localises to the mitochondrion inner membrane. It localises to the nucleus. It is found in the cytoplasm. The protein resides in the cell membrane. Protein with pleiotropic attributes mediated in a cell-compartment- and tissue-specific manner, which include the plasma membrane-associated cell signaling functions, mitochondrial chaperone, and transcriptional co-regulator of transcription factors in the nucleus. Plays a role in adipose tissue and glucose homeostasis in a sex-specific manner. Contributes to pulmonary vascular remodeling by accelerating proliferation of pulmonary arterial smooth muscle cells. In terms of biological role, in the mitochondria, together with PHB2, forms large ring complexes (prohibitin complexes) in the inner mitochondrial membrane (IMM) and functions as a chaperone protein that stabilizes mitochondrial respiratory enzymes and maintains mitochondrial integrity in the IMM, which is required for mitochondrial morphogenesis, neuronal survival, and normal lifespan. The prohibitin complex, with DNAJC19, regulates cardiolipin remodeling and the protein turnover of OMA1 in a cardiolipin-binding manner. Regulates mitochondrial respiration activity playing a role in cellular aging. The prohibitin complex plays a role of mitophagy receptor involved in targeting mitochondria for autophagic degradation. Involved in mitochondrial-mediated antiviral innate immunity, activates RIG-I-mediated signal transduction and production of IFNB1 and proinflammatory cytokine IL6. Functionally, in the nucleus, acts as a transcription coregulator, enhances promoter binding by TP53, a transcription factor it activates, but reduces the promoter binding by E2F1, a transcription factor it represses. Interacts with STAT3 to affect IL17 secretion in T-helper Th17 cells. Its function is as follows. In the plasma membrane, cooperates with CD86 to mediate CD86-signaling in B lymphocytes that regulates the level of IgG1 produced through the activation of distal signaling intermediates. Upon CD40 engagement, required to activate NF-kappa-B signaling pathway via phospholipase C and protein kinase C activation. The protein is Prohibitin 1 (PHB1) of Bos taurus (Bovine).